Reading from the N-terminus, the 174-residue chain is Regulator of G-protein signaling 8 (174 aa).

Positions 46 to 162 constitute an RGS domain; sequence SFDILLSNKY…IRSKIYQDLL (117 aa).

The protein resides in the cell membrane. The protein localises to the membrane. Its subcellular location is the perikaryon. It localises to the cell projection. It is found in the dendrite. The protein resides in the nucleus. In terms of biological role, regulates G protein-coupled receptor signaling cascades, including signaling via muscarinic acetylcholine receptors and dopamine receptors. Inhibits signal transduction by increasing the GTPase activity of G protein alpha subunits, thereby driving them into their inactive GDP-bound form. Modulates the activity of potassium channels that are activated in response to G protein-coupled receptor signaling. The protein is Regulator of G-protein signaling 8 (rgs8) of Danio rerio (Zebrafish).